A 221-amino-acid polypeptide reads, in one-letter code: Protein-disulfide oxidoreductase DsbI (221 aa).

A helical membrane pass occupies residues 27 to 47 (FLWLLMAVAMGGLIILAHSFF). Cysteines 56 and 59 form a disulfide. A run of 2 helical transmembrane segments spans residues 64 to 84 (FAMFVMVFGGLIAAINPKNII) and 85 to 105 (LKLIGCLAAFYGSIMGIKFSV). Residues Cys128 and Cys154 are joined by a disulfide bond. A helical membrane pass occupies residues 189-209 (LAFYEYGAGVPAGVWAMFCTV).

This sequence belongs to the DsbB family. DsbI subfamily. Interacts with DsbL.

It is found in the cell inner membrane. In terms of biological role, required for disulfide bond formation in some proteins. Part of a redox system composed of DsbI and DsbL that mediates formation of an essential disulfide bond in AssT. The protein is Protein-disulfide oxidoreductase DsbI of Lelliottia amnigena (Enterobacter amnigenus).